The sequence spans 590 residues: Major surface protein MspTL (590 aa).

The first 19 residues, 1 to 19 (MKKILAFFLVFALAGAVFA), serve as a signal peptide directing secretion.

The protein localises to the cell outer membrane. Functionally, major component of the outer membrane. The sequence is that of Major surface protein MspTL (mspTL) from Treponema lecithinolyticum.